The following is a 655-amino-acid chain: Putative calcium up-regulated protein J (655 aa).

A Ricin B-type lectin domain is found at Lys40 to Glu181.

Belongs to the cup family.

The chain is Putative calcium up-regulated protein J (cupJ) from Dictyostelium discoideum (Social amoeba).